The sequence spans 344 residues: 4-hydroxy-3-methylbut-2-en-1-yl diphosphate synthase (flavodoxin) (344 aa).

[4Fe-4S] cluster-binding residues include C253, C256, C288, and E295.

Belongs to the IspG family. Requires [4Fe-4S] cluster as cofactor.

The enzyme catalyses (2E)-4-hydroxy-3-methylbut-2-enyl diphosphate + oxidized [flavodoxin] + H2O + 2 H(+) = 2-C-methyl-D-erythritol 2,4-cyclic diphosphate + reduced [flavodoxin]. Its pathway is isoprenoid biosynthesis; isopentenyl diphosphate biosynthesis via DXP pathway; isopentenyl diphosphate from 1-deoxy-D-xylulose 5-phosphate: step 5/6. Its function is as follows. Converts 2C-methyl-D-erythritol 2,4-cyclodiphosphate (ME-2,4cPP) into 1-hydroxy-2-methyl-2-(E)-butenyl 4-diphosphate. The chain is 4-hydroxy-3-methylbut-2-en-1-yl diphosphate synthase (flavodoxin) from Thermotoga maritima (strain ATCC 43589 / DSM 3109 / JCM 10099 / NBRC 100826 / MSB8).